Here is a 212-residue protein sequence, read N- to C-terminus: Pyridoxine/pyridoxamine 5'-phosphate oxidase (212 aa).

Substrate-binding positions include 8 to 11 and lysine 66; that span reads RREY. FMN is bound by residues 61-66, 76-77, arginine 82, lysine 83, and glutamine 105; these read RIVLLK and FT. Tyrosine 123, arginine 127, and serine 131 together coordinate substrate. Residues 140–141 and tryptophan 185 each bind FMN; that span reads QS. Substrate is bound at residue 191-193; it reads RLH. Arginine 195 contacts FMN.

The protein belongs to the pyridoxamine 5'-phosphate oxidase family. In terms of assembly, homodimer. FMN serves as cofactor.

The enzyme catalyses pyridoxamine 5'-phosphate + O2 + H2O = pyridoxal 5'-phosphate + H2O2 + NH4(+). It carries out the reaction pyridoxine 5'-phosphate + O2 = pyridoxal 5'-phosphate + H2O2. Its pathway is cofactor metabolism; pyridoxal 5'-phosphate salvage; pyridoxal 5'-phosphate from pyridoxamine 5'-phosphate: step 1/1. The protein operates within cofactor metabolism; pyridoxal 5'-phosphate salvage; pyridoxal 5'-phosphate from pyridoxine 5'-phosphate: step 1/1. In terms of biological role, catalyzes the oxidation of either pyridoxine 5'-phosphate (PNP) or pyridoxamine 5'-phosphate (PMP) into pyridoxal 5'-phosphate (PLP). This chain is Pyridoxine/pyridoxamine 5'-phosphate oxidase, found in Shewanella halifaxensis (strain HAW-EB4).